The primary structure comprises 220 residues: Putative F-box protein At3g20705 (220 aa).

The 51-residue stretch at 1-51 folds into the F-box domain; the sequence is MMMMSNLPNDLVEEILSRVTVTFMRTVRSICKKWNALTKDRSFTNKYIRNI.

This Arabidopsis thaliana (Mouse-ear cress) protein is Putative F-box protein At3g20705.